The sequence spans 350 residues: uncharacterized protein (350 aa).

The region spanning 171–334 (PTVVIAGYPN…LKERLKKIAI (164 aa)) is the OBG-type G domain. Residues 177 to 184 (GYPNVGKS), 219 to 223 (DTPGL), and 286 to 289 (NKID) contribute to the GTP site.

Belongs to the TRAFAC class OBG-HflX-like GTPase superfamily. OBG GTPase family. NOG subfamily.

This is an uncharacterized protein from Methanocaldococcus jannaschii (strain ATCC 43067 / DSM 2661 / JAL-1 / JCM 10045 / NBRC 100440) (Methanococcus jannaschii).